The primary structure comprises 947 residues: Receptor-like protein 56 (947 aa).

Positions 1 to 27 (MEGKVFSGQKLILVMLLLGHLHGFSSC) are cleaved as a signal peptide. The Extracellular portion of the chain corresponds to 28-899 (IEKERKALLE…EDDKEVAIDM (872 aa)). 3 N-linked (GlcNAc...) asparagine glycosylation sites follow: Asn-60, Asn-75, and Asn-98. LRR repeat units lie at residues 105 to 128 (FEEVRSLDLSNSRLNGLVDDVEGY), 134 to 157 (LRNLQILNFSSNEFNNSIFPFLNA), 159 to 182 (TSLTTLSLRRNNMYGPIPLKELKN), 183 to 207 (LTNLELLDLSGNRIDGSMPVREFPY), 209 to 232 (KKLKALDLSSNGIYSSMEWQGLKN), 233 to 257 (LTNLEVLSLGYNYFDGPIPIEVFCE), 259 to 281 (KNLQELDLRGINFVGQLPLCFGN), 282 to 305 (LNKLRFLDLSSNQLTGNIPPSFSS), and 307 to 330 (ESLEYLSLSDNSFEGFFSLNPLTN). N-linked (GlcNAc...) asparagine glycosylation is found at Asn-141, Asn-148, and Asn-182. Asn-232 is a glycosylation site (N-linked (GlcNAc...) asparagine). An N-linked (GlcNAc...) asparagine glycan is attached at Asn-330. The LRR 10; degenerate repeat unit spans residues 332 to 356 (TKLKVFIFSSKDDMVQVKIESTWQP). LRR repeat units lie at residues 357–380 (LFQLSVLVLRLCSLEKIPNFLMYQ), 381–404 (KNLHVVDLSGNRISGIIPTWLLEN), 405–427 (NPELEVLQLKNNSFTIFQMPTSV), 428–450 (HNLQVLDFSENNIGGLFPDNFGR), 452–476 (LPNLVHMNGSNNGFQGNFPSSMGEM), 477–500 (YNISFLDLSYNNLSGELPQSFVSS), 502–527 (FSLSILQLSHNKFSGHFLPRQTNFTS), 529–549 (IVLRINNNLFTGKIGVGLLTL), 550–575 (VDLCILDMSNNFLEGELPPLLLVFEY), 577–598 (NFLDLSGNLLSGALPSHVSLDN), 600–616 (LFLHNNNFTGPIPDTFL), 617–640 (GSIQILDLRNNKLSGNIPQFVDTQ), 642–663 (ISFLLLRGNSLTGYIPSTLCEF), 664–686 (SKMRLLDLSDNKLNGFIPSCFNN), 757–780 (LNSMYGLDLSSNELSGVIPAELGD), 781–804 (LFKLRALNLSHNFLSSHIPDSFSK), 805–829 (LQDIESLDLSYNMLQGSIPHQLTNL), and 831–854 (SLAIFNVSYNNLSGIIPQGKQFNT). The N-linked (GlcNAc...) asparagine glycan is linked to Asn-415. N-linked (GlcNAc...) asparagine glycosylation is found at Asn-459, Asn-478, Asn-488, and Asn-524. Asn-606 carries an N-linked (GlcNAc...) asparagine glycan. N-linked (GlcNAc...) asparagine glycosylation occurs at Asn-686. N-linked (GlcNAc...) asparagine glycosylation is found at Asn-788, Asn-828, Asn-836, and Asn-841. A helical membrane pass occupies residues 900–920 (LVFYWSTAGTYVTALIGILVL). The Cytoplasmic segment spans residues 921-947 (MCVDCSWRRAWLRLVDAFIASAKSKLA).

Belongs to the RLP family.

Its subcellular location is the cell membrane. This chain is Receptor-like protein 56, found in Arabidopsis thaliana (Mouse-ear cress).